The chain runs to 250 residues: Ribosomal RNA small subunit methyltransferase G (250 aa).

S-adenosyl-L-methionine contacts are provided by residues glycine 78, leucine 83, 129–130 (AE), and arginine 144. The tract at residues 224–250 (IAAPRKRGGQQRRAGHARGTSNRRRGT) is disordered. Positions 227–250 (PRKRGGQQRRAGHARGTSNRRRGT) are enriched in basic residues.

It belongs to the methyltransferase superfamily. RNA methyltransferase RsmG family.

It is found in the cytoplasm. Specifically methylates the N7 position of guanine in position 518 of 16S rRNA. This is Ribosomal RNA small subunit methyltransferase G from Nocardioides sp. (strain ATCC BAA-499 / JS614).